A 95-amino-acid polypeptide reads, in one-letter code: 6 kDa early secretory antigenic target (95 aa).

The next 2 membrane-spanning stretches (helical) occupy residues 11–43 and 49–85; these read IEAA…AAAW and EAYQ…AMAS. Residues 56 to 87 adopt a coiled-coil conformation; the sequence is QKWDATATELNNALQNLARTISEAGQAMASTE.

The protein belongs to the WXG100 family. ESAT-6 subfamily. Forms a tight 1:1 complex with EsxB (CFP-10).

It localises to the secreted. The protein localises to the host membrane. In terms of biological role, a secreted protein. Acts as a strong host T-cell antigen. Plays a number of roles in modulating the host's immune response to infection as well as being responsible for bacterial escape into the host cytoplasm. This is 6 kDa early secretory antigenic target (esxA) from Mycobacterium bovis (strain ATCC BAA-935 / AF2122/97).